The primary structure comprises 281 residues: Pantothenate synthetase (281 aa).

Met-30–His-37 is a binding site for ATP. The active-site Proton donor is His-37. (R)-pantoate is bound at residue Gln-61. Residue Gln-61 coordinates beta-alanine. Residue Gly-147–Asp-150 coordinates ATP. Position 153 (Gln-153) interacts with (R)-pantoate. Residues Ile-176 and Leu-184–Arg-187 each bind ATP.

It belongs to the pantothenate synthetase family. In terms of assembly, homodimer.

It localises to the cytoplasm. It catalyses the reaction (R)-pantoate + beta-alanine + ATP = (R)-pantothenate + AMP + diphosphate + H(+). Its pathway is cofactor biosynthesis; (R)-pantothenate biosynthesis; (R)-pantothenate from (R)-pantoate and beta-alanine: step 1/1. In terms of biological role, catalyzes the condensation of pantoate with beta-alanine in an ATP-dependent reaction via a pantoyl-adenylate intermediate. This is Pantothenate synthetase from Porphyromonas gingivalis (strain ATCC BAA-308 / W83).